The chain runs to 476 residues: Endonuclease SceI small subunit (476 aa).

It belongs to the LAGLIDADG endonuclease family. In terms of assembly, endonuclease SceI (Endo.SceI) is a heterodimer of ENS2 and SSC1. In terms of processing, the N-terminus is blocked.

The protein resides in the mitochondrion. In terms of biological role, catalytic component of endonuclease SceI (Endo.SceI), which cleaves specifically at multiple sites on mitochondrial DNA and produces double-stranded breaks. This chain is Endonuclease SceI small subunit (ENS2), found in Saccharomyces cerevisiae (Baker's yeast).